Reading from the N-terminus, the 156-residue chain is uncharacterized protein (156 aa).

2 disordered regions span residues 22–64 (KERV…VLKK) and 81–156 (AARA…DENE). Residues 43–56 (PEEDGDHSDKEDEQ) show a composition bias toward acidic residues. Residue Ser-50 is modified to Phosphoserine. Lys-108 carries the post-translational modification N6-acetyllysine. Residues 121–134 (TKEEDEINKQDSVK) show a composition bias toward basic and acidic residues. Residue Ser-148 is modified to Phosphoserine.

This is an uncharacterized protein from Bos taurus (Bovine).